The sequence spans 325 residues: Probable 4-hydroxy-tetrahydrodipicolinate reductase 2, chloroplastic (325 aa).

A chloroplast-targeting transit peptide spans 1–32 (MLSLRPPCTLSPAPWRRRRTLHGAAGTPQRVS). NAD(+) is bound by residues 57–62 (GCTGKM), 149–151 (GTT), and 172–175 (SPQM). The Proton donor/acceptor role is filled by His-208. Catalysis depends on Lys-212, which acts as the Proton donor. 217 to 218 (GT) contacts (S)-2,3,4,5-tetrahydrodipicolinate.

The protein belongs to the DapB family.

The protein resides in the plastid. Its subcellular location is the chloroplast. It carries out the reaction (S)-2,3,4,5-tetrahydrodipicolinate + NAD(+) + H2O = (2S,4S)-4-hydroxy-2,3,4,5-tetrahydrodipicolinate + NADH + H(+). It catalyses the reaction (S)-2,3,4,5-tetrahydrodipicolinate + NADP(+) + H2O = (2S,4S)-4-hydroxy-2,3,4,5-tetrahydrodipicolinate + NADPH + H(+). The protein operates within amino-acid biosynthesis; L-lysine biosynthesis via DAP pathway; (S)-tetrahydrodipicolinate from L-aspartate: step 4/4. Functionally, catalyzes the conversion of 4-hydroxy-tetrahydrodipicolinate (HTPA) to tetrahydrodipicolinate. The sequence is that of Probable 4-hydroxy-tetrahydrodipicolinate reductase 2, chloroplastic (DAPB2) from Oryza sativa subsp. japonica (Rice).